The following is a 453-amino-acid chain: Potassium/proton antiporter CemA (453 aa).

Transmembrane regions (helical) follow at residues Tyr235 to Leu255, Ile328 to Leu348, Ile378 to Ile398, and Val414 to Phe434.

The protein belongs to the CemA family.

The protein localises to the plastid. It localises to the chloroplast inner membrane. The catalysed reaction is K(+)(in) + H(+)(out) = K(+)(out) + H(+)(in). Contributes to K(+)/H(+) antiport activity by supporting proton efflux to control proton extrusion and homeostasis in chloroplasts in a light-dependent manner to modulate photosynthesis. Prevents excessive induction of non-photochemical quenching (NPQ) under continuous-light conditions. Indirectly promotes efficient inorganic carbon uptake into chloroplasts. This Zygnema circumcarinatum (Green alga) protein is Potassium/proton antiporter CemA.